The chain runs to 151 residues: Ribosome maturation factor RimP (151 aa).

The protein belongs to the RimP family.

It localises to the cytoplasm. Functionally, required for maturation of 30S ribosomal subunits. The polypeptide is Ribosome maturation factor RimP (Nitrosococcus oceani (strain ATCC 19707 / BCRC 17464 / JCM 30415 / NCIMB 11848 / C-107)).